The following is a 373-amino-acid chain: MLKQVTPLVLIAAVTACSSPVERRQANGGDEYTNVKVQPALTIPEGLNAPTYSKEFDIPKLNSKADDKLVGKLLDIRPPLQVLPMAEGTHVEESGDSIKIVVESIDKDVDLKQELYTVLNNYLASQSINVLSEDYDKGLIETDWIENEEVIDSSFWGSDEIYQLRQRYQFEVDVRPHGRSGNIAINLIDHEESFDGKQQNILLSGEDKRRYTIDMLNNAVAYMSVKRSQAIKAKRLRESLGIDVNVVKGAPATVEGEAAEQSYWLADAPFERTWDRLRIVLPEMGFEIVDMDSNKGLYYINVNDDSGFWSSLWSEKKLPVEEGSYRMLLKEGDSEDKTRIYLHNSEDKPLDNVVVEAVYEGFSELMQEDRKIR.

The signal sequence occupies residues 1 to 16 (MLKQVTPLVLIAAVTA). The N-palmitoyl cysteine moiety is linked to residue Cys17. A lipid anchor (S-diacylglycerol cysteine) is attached at Cys17.

Belongs to the BamC family. As to quaternary structure, part of the Bam complex.

The protein resides in the cell outer membrane. Functionally, part of the outer membrane protein assembly complex, which is involved in assembly and insertion of beta-barrel proteins into the outer membrane. The chain is Outer membrane protein assembly factor BamC from Shewanella sediminis (strain HAW-EB3).